The primary structure comprises 180 residues: Ribosome rescue factor SmrB (180 aa).

Residues 98–173 (LDLHGLTQLQ…GNAALLVLVA (76 aa)) form the Smr domain.

Belongs to the SmrB family. Associates with collided ribosomes, but not with correctly translating polysomes.

Its function is as follows. Acts as a ribosome collision sensor. Detects stalled/collided disomes (pairs of ribosomes where the leading ribosome is stalled and a second ribosome has collided with it) and endonucleolytically cleaves mRNA at the 5' boundary of the stalled ribosome. Stalled/collided disomes form a new interface (primarily via the 30S subunits) that binds SmrB. Cleaved mRNA becomes available for tmRNA ligation, leading to ribosomal subunit dissociation and rescue of stalled ribosomes. The chain is Ribosome rescue factor SmrB from Pectobacterium carotovorum subsp. carotovorum (strain PC1).